The following is a 117-amino-acid chain: Large ribosomal subunit protein bL19 (117 aa).

It belongs to the bacterial ribosomal protein bL19 family.

Its function is as follows. This protein is located at the 30S-50S ribosomal subunit interface and may play a role in the structure and function of the aminoacyl-tRNA binding site. In Christiangramia forsetii (strain DSM 17595 / CGMCC 1.15422 / KT0803) (Gramella forsetii), this protein is Large ribosomal subunit protein bL19.